Consider the following 508-residue polypeptide: MKLAYWMYAGPAHIGTLRIASSFKNVHAIMHAPLGDDYFNVMRSMLEREQNFTPVTTSVVDRQVLSRGSQEKVVDNIVRKDGEETPDLIVLTPTCTSSILQEDLANFVDRAQMDAHCDVLLADVNHYRYNELQAGDRTLKQIVEFYIKKARKQGNLATEKTAKPSVNLIGFTTLGFHNQHDCTELKRLMADLGIEVNLILPEKATVDQLAKIPQAWFNLCPYREIGLMTAEYLQEEFAQPYVDITPMGVVETARCIRKMQQVLNQQGFDVNYEDFIQQQTRHVSQAAWFSRSIDCQNLTGKKAVVFGDNTHAAAMTKILAREMGIHVVLAGTYCKYDADWFRAEVSEYCDEVLISEDNGAIADAIARIEPAAIFGTQMERHVGKRLDIPCGVIAAPIHIQNFPLGYKPFLGYEGTNQIADLVYNSFTLGMEDHLLEIFGGHDTKEVITKGISSDSDLGWHSTAQAELNKVPGFVRGKVKRNTEKFARERGLSEITLEVMYAAKEAVGA.

Residue Asp-36 participates in [4Fe-4S] cluster binding. The Proton donor role is filled by Asp-294. 429-430 (GM) is a binding site for substrate.

It belongs to the ChlB/BchB/BchZ family. As to quaternary structure, protochlorophyllide reductase is composed of three subunits; ChlL, ChlN and ChlB. Forms a heterotetramer of two ChlB and two ChlN subunits. It depends on [4Fe-4S] cluster as a cofactor.

It carries out the reaction chlorophyllide a + oxidized 2[4Fe-4S]-[ferredoxin] + 2 ADP + 2 phosphate = protochlorophyllide a + reduced 2[4Fe-4S]-[ferredoxin] + 2 ATP + 2 H2O. It participates in porphyrin-containing compound metabolism; chlorophyll biosynthesis (light-independent). Its function is as follows. Component of the dark-operative protochlorophyllide reductase (DPOR) that uses Mg-ATP and reduced ferredoxin to reduce ring D of protochlorophyllide (Pchlide) to form chlorophyllide a (Chlide). This reaction is light-independent. The NB-protein (ChlN-ChlB) is the catalytic component of the complex. This is Light-independent protochlorophyllide reductase subunit B from Synechocystis sp. (strain ATCC 27184 / PCC 6803 / Kazusa).